The chain runs to 244 residues: NAD reductase coq12 (244 aa).

The tract at residues Asn131–His158 is disordered. Residues Pro132 to His158 are compositionally biased toward polar residues.

Its subcellular location is the mitochondrion. The enzyme catalyses a reduced flavin + NAD(+) = an oxidized flavin + NADH + 2 H(+). In terms of biological role, NADH-dependent flavin reductase that acts in the coenzyme Q biosynthetic pathway. Required for synthesis of the p-hydroxybenzoic acid (PHB) precursor to form a quinone backbone. This is NAD reductase coq12 from Schizosaccharomyces pombe (strain 972 / ATCC 24843) (Fission yeast).